Here is a 429-residue protein sequence, read N- to C-terminus: Histidine--tRNA ligase (429 aa).

Belongs to the class-II aminoacyl-tRNA synthetase family. As to quaternary structure, homodimer.

The protein resides in the cytoplasm. The catalysed reaction is tRNA(His) + L-histidine + ATP = L-histidyl-tRNA(His) + AMP + diphosphate + H(+). This is Histidine--tRNA ligase from Streptococcus pneumoniae serotype 19F (strain G54).